We begin with the raw amino-acid sequence, 574 residues long: Developmental and secondary metabolism regulator veA (574 aa).

Disordered regions lie at residues 1–22 (MATR…SRIT), 39–60 (ERAR…VDPP), 255–500 (RSSD…GAGK), and 513–548 (RSYE…GRNF). The Velvet domain maps to 25–230 (GKKLTYKLNV…AEQGCRVRIR (206 aa)). The short motif at 39–44 (ERARAC) is the Nuclear localization signal element. Composition is skewed to pro residues over residues 314–323 (RPMPPAPVPA) and 330–341 (PAPPAPPAPPSH). Composition is skewed to polar residues over residues 343–359 (PGYQ…TQYP), 385–394 (HARNPSTSAE), 402–415 (YPSS…SSYP), and 448–458 (VAQSAGPRSQT). Residues 457–501 (QTPSSSLVPSLPPLKALSGDYPNNLSQPSSSISQSPSHDLGAGKK) are PEST. Composition is skewed to low complexity over residues 459–474 (PSSS…KALS) and 482–493 (SQPSSSISQSPS). 2 stretches are compositionally biased toward basic and acidic residues: residues 513–525 (RSYE…DDRP) and 532–543 (PDTESHPRRLSD).

The protein belongs to the velvet family. VeA subfamily. As to quaternary structure, component of the heterotrimeric velvet complex composed of laeA, veA and velB; VeA acting as a bridging protein between laeA and velB.

The protein resides in the nucleus. The protein localises to the cytoplasm. Functionally, component of the velvet transcription factor complex that controls sexual/asexual developmental ratio in response to light, promoting sexual development in the darkness while stimulating asexual sporulation under illumination. The velvet complex hat acts as a global regulator for secondary metabolite gene expression. Controls the expression of the aflatoxin gene cluster. Required for the expression of aflR and aflJ. Mediates the coordination of aflatoxigenic vesicles (aflatoxisomes) development with aflatoxin gene expression. Regulates branched chain amino acid and ethanol metabolism and acts as a positive regulator of mitochondrial and peroxisomal beta-oxidation. The chain is Developmental and secondary metabolism regulator veA from Aspergillus parasiticus.